The following is a 61-amino-acid chain: uncharacterized protein (61 aa).

This is an uncharacterized protein from Homo sapiens (Human).